The following is a 276-amino-acid chain: ATP synthase subunit delta (276 aa).

This sequence belongs to the ATPase delta chain family. F-type ATPases have 2 components, F(1) - the catalytic core - and F(0) - the membrane proton channel. F(1) has five subunits: alpha(3), beta(3), gamma(1), delta(1), epsilon(1). F(0) has three main subunits: a(1), b(2) and c(10-14). The alpha and beta chains form an alternating ring which encloses part of the gamma chain. F(1) is attached to F(0) by a central stalk formed by the gamma and epsilon chains, while a peripheral stalk is formed by the delta and b chains.

It is found in the cell membrane. In terms of biological role, f(1)F(0) ATP synthase produces ATP from ADP in the presence of a proton or sodium gradient. F-type ATPases consist of two structural domains, F(1) containing the extramembraneous catalytic core and F(0) containing the membrane proton channel, linked together by a central stalk and a peripheral stalk. During catalysis, ATP synthesis in the catalytic domain of F(1) is coupled via a rotary mechanism of the central stalk subunits to proton translocation. Functionally, this protein is part of the stalk that links CF(0) to CF(1). It either transmits conformational changes from CF(0) to CF(1) or is implicated in proton conduction. The polypeptide is ATP synthase subunit delta (Frankia casuarinae (strain DSM 45818 / CECT 9043 / HFP020203 / CcI3)).